A 194-amino-acid polypeptide reads, in one-letter code: dITP/XTP pyrophosphatase (194 aa).

8–13 (TNNPHK) is a substrate binding site. The active-site Proton acceptor is the Asp69. Residue Asp69 participates in Mg(2+) binding. Substrate contacts are provided by residues Thr70, 150 to 153 (FGYD), Lys173, and 178 to 179 (HR).

This sequence belongs to the HAM1 NTPase family. Homodimer. Mg(2+) serves as cofactor.

The catalysed reaction is XTP + H2O = XMP + diphosphate + H(+). The enzyme catalyses dITP + H2O = dIMP + diphosphate + H(+). It catalyses the reaction ITP + H2O = IMP + diphosphate + H(+). Its function is as follows. Pyrophosphatase that catalyzes the hydrolysis of nucleoside triphosphates to their monophosphate derivatives, with a high preference for the non-canonical purine nucleotides XTP (xanthosine triphosphate), dITP (deoxyinosine triphosphate) and ITP. Seems to function as a house-cleaning enzyme that removes non-canonical purine nucleotides from the nucleotide pool, thus preventing their incorporation into DNA/RNA and avoiding chromosomal lesions. This Porphyromonas gingivalis (strain ATCC BAA-308 / W83) protein is dITP/XTP pyrophosphatase.